The following is a 156-amino-acid chain: ATP synthase subunit b', chloroplastic (156 aa).

A helical membrane pass occupies residues 20-42 (NGTLPLMALQFLTLMVLLNTIFY).

Belongs to the ATPase B chain family. In terms of assembly, F-type ATPases have 2 components, F(1) - the catalytic core - and F(0) - the membrane proton channel. F(1) has five subunits: alpha(3), beta(3), gamma(1), delta(1), epsilon(1). F(0) has four main subunits: a(1), b(1), b'(1) and c(10-14). The alpha and beta chains form an alternating ring which encloses part of the gamma chain. F(1) is attached to F(0) by a central stalk formed by the gamma and epsilon chains, while a peripheral stalk is formed by the delta, b and b' chains.

Its subcellular location is the plastid. The protein resides in the chloroplast thylakoid membrane. F(1)F(0) ATP synthase produces ATP from ADP in the presence of a proton or sodium gradient. F-type ATPases consist of two structural domains, F(1) containing the extramembraneous catalytic core and F(0) containing the membrane proton channel, linked together by a central stalk and a peripheral stalk. During catalysis, ATP synthesis in the catalytic domain of F(1) is coupled via a rotary mechanism of the central stalk subunits to proton translocation. Functionally, component of the F(0) channel, it forms part of the peripheral stalk, linking F(1) to F(0). The b'-subunit is a diverged and duplicated form of b found in plants and photosynthetic bacteria. This chain is ATP synthase subunit b', chloroplastic, found in Pyropia yezoensis (Susabi-nori).